A 662-amino-acid polypeptide reads, in one-letter code: Acyl-coenzyme A oxidase acox-1.4 (662 aa).

FAD-binding positions include 148-151 (YAQT), 156-157 (GT), and Gly-190. Substrate-binding positions include 284 to 287 (KVNH) and Arg-294. FAD-binding positions include Arg-319 and 339–342 (QQHR). Residues His-341, Ser-391, His-395, and Gln-403 each coordinate ATP. Residue Gly-410 participates in FAD binding. 432 to 433 (YE) lines the substrate pocket. Glu-433 (proton acceptor) is an active-site residue. Position 435 (Glu-435) interacts with FAD. Residues 526-529 (RASR) and Tyr-574 contribute to the ATP site. A Microbody targeting signal motif is present at residues 660 to 662 (AKL).

The protein belongs to the acyl-CoA oxidase family. In terms of assembly, homodimer. Requires FAD as cofactor.

The protein resides in the peroxisome. It catalyses the reaction asc-C9-CoA + O2 = asc-DeltaC9-CoA + H2O2. It functions in the pathway lipid metabolism; peroxisomal fatty acid beta-oxidation. Its activity is regulated as follows. Activated by ATP. ATP binding leads to a conformational change that promotes FAD cofactor binding and enzyme activity. ATP binding likely occurs during acox-1.4 folding and/or dimer formation. In terms of biological role, involved in the first step of peroxisomal beta-oxidation by catalyzing the desaturation of fatty acid-derived side chains of ascaroside pheromones, which regulates development and behavior. Specifically, shortens ascarosides with a 9-carbon side chain (asc-C9) and, in association with acox-1.1, may contribute to the shortening of ascarosides with a 11-carbon side chain (asc-C11). May contribute to the production of indol-3-carbonyl(IC)-ascarosides in association with acox-1.1 and acox-3. The sequence is that of Acyl-coenzyme A oxidase acox-1.4 from Caenorhabditis elegans.